Consider the following 150-residue polypeptide: Endoribonuclease YbeY (150 aa).

Zn(2+) is bound by residues His-116, His-120, and His-126.

The protein belongs to the endoribonuclease YbeY family. Zn(2+) is required as a cofactor.

The protein localises to the cytoplasm. Single strand-specific metallo-endoribonuclease involved in late-stage 70S ribosome quality control and in maturation of the 3' terminus of the 16S rRNA. The chain is Endoribonuclease YbeY from Beutenbergia cavernae (strain ATCC BAA-8 / DSM 12333 / CCUG 43141 / JCM 11478 / NBRC 16432 / NCIMB 13614 / HKI 0122).